A 447-amino-acid chain; its full sequence is Methyl-coenzyme M reductase I subunit beta (447 aa).

Tyrosine 371 is a coenzyme M binding site. Residue glycine 373 coordinates coenzyme B.

This sequence belongs to the methyl-coenzyme M reductase beta subunit family. As to quaternary structure, MCR is a hexamer of two alpha, two beta, and two gamma chains, forming a dimer of heterotrimers. Coenzyme F430 serves as cofactor.

Its subcellular location is the cytoplasm. The enzyme catalyses coenzyme B + methyl-coenzyme M = methane + coenzyme M-coenzyme B heterodisulfide. It participates in one-carbon metabolism; methyl-coenzyme M reduction; methane from methyl-coenzyme M: step 1/1. Functionally, component of the methyl-coenzyme M reductase (MCR) I that catalyzes the reductive cleavage of methyl-coenzyme M (CoM-S-CH3 or 2-(methylthio)ethanesulfonate) using coenzyme B (CoB or 7-mercaptoheptanoylthreonine phosphate) as reductant which results in the production of methane and the mixed heterodisulfide of CoB and CoM (CoM-S-S-CoB). This is the final step in methanogenesis. This chain is Methyl-coenzyme M reductase I subunit beta (mcrB), found in Methanocaldococcus jannaschii (strain ATCC 43067 / DSM 2661 / JAL-1 / JCM 10045 / NBRC 100440) (Methanococcus jannaschii).